We begin with the raw amino-acid sequence, 131 residues long: MIYGIGTDICDVRRIRASLERHGDRFAEKVLAEGELATWRARRARWPERGIRFVATRFSAKEAFSKAIGMGMVMPMTWRSCEVIKLPSGQPAIVLHGALKEWFEARNLQVHLSVTDESDYAASFCVVERRA.

Mg(2+) contacts are provided by aspartate 8 and glutamate 62.

The protein belongs to the P-Pant transferase superfamily. AcpS family. The cofactor is Mg(2+).

Its subcellular location is the cytoplasm. It catalyses the reaction apo-[ACP] + CoA = holo-[ACP] + adenosine 3',5'-bisphosphate + H(+). In terms of biological role, transfers the 4'-phosphopantetheine moiety from coenzyme A to a Ser of acyl-carrier-protein. The polypeptide is Holo-[acyl-carrier-protein] synthase (Delftia acidovorans (strain DSM 14801 / SPH-1)).